The chain runs to 318 residues: Transaldolase (318 aa).

Catalysis depends on lysine 132, which acts as the Schiff-base intermediate with substrate.

It belongs to the transaldolase family. Type 1 subfamily. As to quaternary structure, homodimer.

It localises to the cytoplasm. It catalyses the reaction D-sedoheptulose 7-phosphate + D-glyceraldehyde 3-phosphate = D-erythrose 4-phosphate + beta-D-fructose 6-phosphate. It participates in carbohydrate degradation; pentose phosphate pathway; D-glyceraldehyde 3-phosphate and beta-D-fructose 6-phosphate from D-ribose 5-phosphate and D-xylulose 5-phosphate (non-oxidative stage): step 2/3. Transaldolase is important for the balance of metabolites in the pentose-phosphate pathway. This Shewanella baltica (strain OS195) protein is Transaldolase.